The chain runs to 531 residues: Efflux pump terG (531 aa).

The segment covering 1 to 11 (MSSSTLEGQET) has biased composition (polar residues). Residues 1–27 (MSSSTLEGQETASHHSKNSPSRHGDDG) are disordered. 13 consecutive transmembrane segments (helical) span residues 86–106 (GKLSWTISGYGLTLGTFILIG), 117–137 (AIFVIGMGWLALTSMMAGVSV), 145–165 (ILARVLQGLGPALTVPNALAI), 179–199 (FAWFAASAPVGAMAGLLFGPL), 207–227 (WIYWSQALGVAFVFALSIVAI), 249–269 (IDLLGGACGVTALVLFNFAWN), 280–300 (YVYVCLILSFLFLAAFFYVEL), 319–339 (FVFGCTAAGWSTFGIWLFYVI), 351–371 (IQMAAWLSPILVTGIGTALIV), 380–400 (ASSIMLFAMLCYFITSLLMAL), 402–422 (PVHSIYWTYFFFATIIATFAM), 447–467 (SVIMTIVVYSISLGLGFAGTI), and 488–508 (TLWFSVGLTAFGTVLALIFLL).

This sequence belongs to the major facilitator superfamily.

The protein localises to the cell membrane. Efflux pump that might be required for efficient secretion of terrein or other secondary metabolies produced by the terrein genne cluster. In Aspergillus terreus (strain NIH 2624 / FGSC A1156), this protein is Efflux pump terG.